A 231-amino-acid chain; its full sequence is Orotate phosphoribosyltransferase (231 aa).

5-phospho-alpha-D-ribose 1-diphosphate contacts are provided by residues K27, Y79–K80, R106, K107, K110, H112, and D133–A141. Positions 137 and 166 each coordinate orotate.

Belongs to the purine/pyrimidine phosphoribosyltransferase family. PyrE subfamily. As to quaternary structure, homodimer. The cofactor is Mg(2+).

It carries out the reaction orotidine 5'-phosphate + diphosphate = orotate + 5-phospho-alpha-D-ribose 1-diphosphate. Its pathway is pyrimidine metabolism; UMP biosynthesis via de novo pathway; UMP from orotate: step 1/2. In terms of biological role, catalyzes the transfer of a ribosyl phosphate group from 5-phosphoribose 1-diphosphate to orotate, leading to the formation of orotidine monophosphate (OMP). This is Orotate phosphoribosyltransferase from Bifidobacterium adolescentis (strain ATCC 15703 / DSM 20083 / NCTC 11814 / E194a).